The following is a 266-amino-acid chain: 4-hydroxy-tetrahydrodipicolinate reductase (266 aa).

An NAD(+)-binding site is contributed by 10-15 (GPRGRM). Lys38 provides a ligand contact to NADP(+). NAD(+) is bound by residues 99 to 101 (GTT) and 125 to 128 (APNF). His155 functions as the Proton donor/acceptor in the catalytic mechanism. His156 contacts (S)-2,3,4,5-tetrahydrodipicolinate. The Proton donor role is filled by Lys159. 165-166 (GT) lines the (S)-2,3,4,5-tetrahydrodipicolinate pocket.

This sequence belongs to the DapB family.

The protein resides in the cytoplasm. It carries out the reaction (S)-2,3,4,5-tetrahydrodipicolinate + NAD(+) + H2O = (2S,4S)-4-hydroxy-2,3,4,5-tetrahydrodipicolinate + NADH + H(+). The enzyme catalyses (S)-2,3,4,5-tetrahydrodipicolinate + NADP(+) + H2O = (2S,4S)-4-hydroxy-2,3,4,5-tetrahydrodipicolinate + NADPH + H(+). It functions in the pathway amino-acid biosynthesis; L-lysine biosynthesis via DAP pathway; (S)-tetrahydrodipicolinate from L-aspartate: step 4/4. In terms of biological role, catalyzes the conversion of 4-hydroxy-tetrahydrodipicolinate (HTPA) to tetrahydrodipicolinate. The sequence is that of 4-hydroxy-tetrahydrodipicolinate reductase from Bacillus cereus (strain ZK / E33L).